The following is a 235-amino-acid chain: Methylosome subunit pICln (235 aa).

Positions 1-21 (MSFLKSFPPPGSAEGLRQQQP) are disordered. Position 2 is an N-acetylserine (serine 2). Phosphoserine is present on residues serine 100, serine 142, serine 191, serine 193, serine 196, and serine 208. Residues 133 to 157 (LHPDPEDEDSDDYDGEEYDVEAHEQ) are disordered. Over residues 137–151 (PEDEDSDDYDGEEYD) the composition is skewed to acidic residues. The interval 195 to 217 (SSQYNMAGVRTEDSTRDYEDGME) is disordered. Basic and acidic residues predominate over residues 204 to 213 (RTEDSTRDYE). Position 221 is a phosphothreonine (threonine 221).

The protein belongs to the pICln (TC 1.A.47) family. As to quaternary structure, component of the methylosome, a 20S complex containing at least PRMT5/SKB1, WDR77/MEP50 and CLNS1A/pICln. May mediate SNRPD1 and SNRPD3 methylation. Forms a 6S pICln-Sm complex composed of CLNS1A/pICln, SNRPD1, SNRPD2, SNRPE, SNRPF and SNRPG; ring-like structure where CLNS1A/pICln mimics additional Sm proteins and which is unable to assemble into the core snRNP. Interacts with LSM10 and LSM11.

It is found in the cytoplasm. The protein localises to the cytosol. Its subcellular location is the nucleus. It localises to the cytoskeleton. Involved in both the assembly of spliceosomal snRNPs and the methylation of Sm proteins. Chaperone that regulates the assembly of spliceosomal U1, U2, U4 and U5 small nuclear ribonucleoproteins (snRNPs), the building blocks of the spliceosome, and thereby plays an important role in the splicing of cellular pre-mRNAs. Most spliceosomal snRNPs contain a common set of Sm proteins SNRPB, SNRPD1, SNRPD2, SNRPD3, SNRPE, SNRPF and SNRPG that assemble in a heptameric protein ring on the Sm site of the small nuclear RNA to form the core snRNP (Sm core). In the cytosol, the Sm proteins SNRPD1, SNRPD2, SNRPE, SNRPF and SNRPG are trapped in an inactive 6S pICln-Sm complex by the chaperone CLNS1A that controls the assembly of the core snRNP. Dissociation by the SMN complex of CLNS1A from the trapped Sm proteins and their transfer to an SMN-Sm complex triggers the assembly of core snRNPs and their transport to the nucleus. This chain is Methylosome subunit pICln (CLNS1A), found in Canis lupus familiaris (Dog).